A 200-amino-acid chain; its full sequence is Small ribosomal subunit protein uS4 (200 aa).

A disordered region spans residues 20 to 41; the sequence is SGTGKELEKRPYAPGQHGPNQR. In terms of domain architecture, S4 RNA-binding spans 92–155; sequence ARLDAVVYSL…LKLDIIAESV (64 aa).

The protein belongs to the universal ribosomal protein uS4 family. As to quaternary structure, part of the 30S ribosomal subunit. Contacts protein S5. The interaction surface between S4 and S5 is involved in control of translational fidelity.

In terms of biological role, one of the primary rRNA binding proteins, it binds directly to 16S rRNA where it nucleates assembly of the body of the 30S subunit. Functionally, with S5 and S12 plays an important role in translational accuracy. This chain is Small ribosomal subunit protein uS4, found in Staphylococcus saprophyticus subsp. saprophyticus (strain ATCC 15305 / DSM 20229 / NCIMB 8711 / NCTC 7292 / S-41).